The following is a 498-amino-acid chain: Glycerol kinase (498 aa).

ADP is bound at residue Thr-11. 3 residues coordinate ATP: Thr-11, Ser-12, and Ser-13. A sn-glycerol 3-phosphate-binding site is contributed by Thr-11. Arg-15 lines the ADP pocket. Sn-glycerol 3-phosphate-binding residues include Arg-81, Glu-82, Tyr-133, and Asp-242. The glycerol site is built by Arg-81, Glu-82, Tyr-133, Asp-242, and Gln-243. ADP-binding residues include Thr-264 and Gly-307. ATP is bound by residues Thr-264, Gly-307, Gln-311, and Gly-408. ADP is bound by residues Gly-408 and Asn-412.

The protein belongs to the FGGY kinase family.

The enzyme catalyses glycerol + ATP = sn-glycerol 3-phosphate + ADP + H(+). Its pathway is polyol metabolism; glycerol degradation via glycerol kinase pathway; sn-glycerol 3-phosphate from glycerol: step 1/1. Its activity is regulated as follows. Inhibited by fructose 1,6-bisphosphate (FBP). Its function is as follows. Key enzyme in the regulation of glycerol uptake and metabolism. Catalyzes the phosphorylation of glycerol to yield sn-glycerol 3-phosphate. The polypeptide is Glycerol kinase (Ralstonia nicotianae (strain ATCC BAA-1114 / GMI1000) (Ralstonia solanacearum)).